Here is a 436-residue protein sequence, read N- to C-terminus: UPF0597 protein YhaM (436 aa).

This sequence belongs to the UPF0597 family.

The chain is UPF0597 protein YhaM from Escherichia coli O139:H28 (strain E24377A / ETEC).